An 878-amino-acid polypeptide reads, in one-letter code: Protein translocase subunit SecA (878 aa).

Residues Q81, G99–T103, and D489 each bind ATP.

The protein belongs to the SecA family.

It is found in the plastid. The protein resides in the chloroplast stroma. Its subcellular location is the chloroplast thylakoid membrane. The enzyme catalyses ATP + H2O + cellular proteinSide 1 = ADP + phosphate + cellular proteinSide 2.. Functionally, has a central role in coupling the hydrolysis of ATP to the transfer of proteins across the thylakoid membrane. In Thalassiosira pseudonana (Marine diatom), this protein is Protein translocase subunit SecA.